The chain runs to 961 residues: DNA repair endonuclease XPF (961 aa).

3 disordered regions span residues 1–27 (MADS…SADT), 451–485 (NYAK…PPLA), and 674–693 (PTDE…QATK). Over residues 13 to 22 (TENERPKEVE) the composition is skewed to basic and acidic residues. Residues 458–469 (TRSAPPKNVSSN) show a composition bias toward polar residues. The ERCC4 domain maps to 697–777 (KVIVDMREFR…KPILLIEFDQ (81 aa)).

Belongs to the XPF family. In terms of assembly, heterodimer. Interacts with hdm.

The protein localises to the nucleus. In terms of biological role, implicated in recombination events during meiosis, mostly in meiotic exchange. May directly resolve Holliday junctions within recombination intermediates leading to DNA exchange. Also required for the repair of mismatches within meiotic heteroduplex DNA and for nucleotide excision repair. The polypeptide is DNA repair endonuclease XPF (mei-9) (Drosophila melanogaster (Fruit fly)).